A 140-amino-acid polypeptide reads, in one-letter code: UPF0306 protein YhbP (140 aa).

It belongs to the UPF0306 family.

In Escherichia coli O6:H1 (strain CFT073 / ATCC 700928 / UPEC), this protein is UPF0306 protein YhbP.